A 73-amino-acid chain; its full sequence is Cell division protein ZapB (73 aa).

Positions 3–66 (LELLSKLETK…SWNEKVTGLV (64 aa)) form a coiled coil.

It belongs to the ZapB family. Homodimer. The ends of the coiled-coil dimer bind to each other, forming polymers. Interacts with FtsZ.

Its subcellular location is the cytoplasm. Functionally, non-essential, abundant cell division factor that is required for proper Z-ring formation. It is recruited early to the divisome by direct interaction with FtsZ, stimulating Z-ring assembly and thereby promoting cell division earlier in the cell cycle. Its recruitment to the Z-ring requires functional FtsA or ZipA. This is Cell division protein ZapB from Shewanella baltica (strain OS223).